Consider the following 555-residue polypeptide: Dihydroxy-acid dehydratase (555 aa).

Asp-78 is a Mg(2+) binding site. Cys-119 contacts [2Fe-2S] cluster. Mg(2+)-binding residues include Asp-120 and Lys-121. Position 121 is an N6-carboxylysine (Lys-121). Residue Cys-191 coordinates [2Fe-2S] cluster. Glu-444 provides a ligand contact to Mg(2+). The Proton acceptor role is filled by Ser-470.

Belongs to the IlvD/Edd family. In terms of assembly, homodimer. [2Fe-2S] cluster serves as cofactor. The cofactor is Mg(2+).

It catalyses the reaction (2R)-2,3-dihydroxy-3-methylbutanoate = 3-methyl-2-oxobutanoate + H2O. The catalysed reaction is (2R,3R)-2,3-dihydroxy-3-methylpentanoate = (S)-3-methyl-2-oxopentanoate + H2O. It participates in amino-acid biosynthesis; L-isoleucine biosynthesis; L-isoleucine from 2-oxobutanoate: step 3/4. The protein operates within amino-acid biosynthesis; L-valine biosynthesis; L-valine from pyruvate: step 3/4. In terms of biological role, functions in the biosynthesis of branched-chain amino acids. Catalyzes the dehydration of (2R,3R)-2,3-dihydroxy-3-methylpentanoate (2,3-dihydroxy-3-methylvalerate) into 2-oxo-3-methylpentanoate (2-oxo-3-methylvalerate) and of (2R)-2,3-dihydroxy-3-methylbutanoate (2,3-dihydroxyisovalerate) into 2-oxo-3-methylbutanoate (2-oxoisovalerate), the penultimate precursor to L-isoleucine and L-valine, respectively. The polypeptide is Dihydroxy-acid dehydratase (Oleidesulfovibrio alaskensis (strain ATCC BAA-1058 / DSM 17464 / G20) (Desulfovibrio alaskensis)).